Consider the following 171-residue polypeptide: SPbeta prophage-derived uncharacterized protein YokC (171 aa).

This Bacillus subtilis (strain 168) protein is SPbeta prophage-derived uncharacterized protein YokC (yokC).